The chain runs to 452 residues: Probable cytosolic iron-sulfur protein assembly protein 1 (452 aa).

Residues 1-12 are compositionally biased toward pro residues; that stretch reads MPPPTTPTPNPS. Residues 1–24 form a disordered region; it reads MPPPTTPTPNPSIPQKATLTPLPP. 6 WD repeats span residues 70-121, 161-200, 213-267, 273-319, 340-379, and 411-452; these read GHAR…DAAA, GHENEVKSLAFSPGGQYLATSSRDKSVWIWEDVSSGQGGD, EHDG…EWVC, GHGG…FGGV, VHTRDVYSVSWSADTGLVASTGSDGIIAVYAEESAPEDVA, and YEVN…VRIS.

The protein belongs to the WD repeat CIA1 family.

In terms of biological role, essential component of the cytosolic iron-sulfur (Fe/S) protein assembly machinery. Required for the maturation of extramitochondrial Fe/S proteins. The sequence is that of Probable cytosolic iron-sulfur protein assembly protein 1 from Chaetomium globosum (strain ATCC 6205 / CBS 148.51 / DSM 1962 / NBRC 6347 / NRRL 1970) (Soil fungus).